A 403-amino-acid chain; its full sequence is Na(+)-translocating NADH-quinone reductase subunit B (403 aa).

Transmembrane regions (helical) follow at residues 56–76, 121–141, 164–184, and 195–212; these read MMIL…WNTG, AYFL…EVLF, LPPS…VVIG, and FLNP…AYPA. T230 is subject to FMN phosphoryl threonine. 6 helical membrane passes run 237–257, 265–285, 287–307, 312–332, 348–368, and 371–391; these read AGGV…FLGI, TSTL…IAAW, IVAG…LIGS, MFAM…GTLF, WAFG…NPAF, and GMML…HFVV.

The protein belongs to the NqrB/RnfD family. In terms of assembly, composed of six subunits; NqrA, NqrB, NqrC, NqrD, NqrE and NqrF. FMN serves as cofactor.

The protein localises to the cell inner membrane. The catalysed reaction is a ubiquinone + n Na(+)(in) + NADH + H(+) = a ubiquinol + n Na(+)(out) + NAD(+). Functionally, NQR complex catalyzes the reduction of ubiquinone-1 to ubiquinol by two successive reactions, coupled with the transport of Na(+) ions from the cytoplasm to the periplasm. NqrA to NqrE are probably involved in the second step, the conversion of ubisemiquinone to ubiquinol. In Azotobacter vinelandii (strain DJ / ATCC BAA-1303), this protein is Na(+)-translocating NADH-quinone reductase subunit B.